The following is a 403-amino-acid chain: Inhibitor of growth protein 3 (403 aa).

A disordered region spans residues 112–149 (DTPSQPVNNHHAHSHTPVEKRKYNPTSHHTTTDHIPEK). Glycyl lysine isopeptide (Lys-Gly) (interchain with G-Cter in SUMO2) cross-links involve residues lysine 133, lysine 150, and lysine 152. Lysine 166 is modified (N6-acetyllysine). A Glycyl lysine isopeptide (Lys-Gly) (interchain with G-Cter in SUMO2) cross-link involves residue lysine 241. Lysine 249 carries the N6-acetyllysine modification. The disordered stretch occupies residues 271 to 310 (TQNASSSAADSRSGRKSKNNNKSSSQQSSSSSSSSSLSSC). Over residues 290–310 (NNKSSSQQSSSSSSSSSLSSC) the composition is skewed to low complexity. Residues 345 to 394 (PRYCICNQVSYGEMVGCDNQDCPIEWFHYGCVGLTEAPKGKWYCPQCTAA) form a PHD-type zinc finger. Zn(2+) is bound by residues cysteine 348, cysteine 350, cysteine 361, cysteine 366, histidine 372, cysteine 375, cysteine 388, and cysteine 391.

It belongs to the ING family. Interacts with H3K4me3 and to a lesser extent with H3K4me2. Component of the NuA4 histone acetyltransferase complex which contains the catalytic subunit KAT5/TIP60 and the subunits EP400, TRRAP/PAF400, BRD8/SMAP, EPC1, DMAP1/DNMAP1, RUVBL1/TIP49, RUVBL2, ING3, actin, ACTL6A/BAF53A, MORF4L1/MRG15, MORF4L2/MRGX, MRGBP, YEATS4/GAS41, VPS72/YL1 and MEAF6. The NuA4 complex interacts with MYC. HTATTIP/TIP60, EPC1, and ING3 together constitute a minimal HAT complex termed Piccolo NuA4. Component of a SWR1-like complex.

Its subcellular location is the nucleus. Component of the NuA4 histone acetyltransferase (HAT) complex which is involved in transcriptional activation of select genes principally by acetylation of nucleosomal histones H4 and H2A. This modification may both alter nucleosome - DNA interactions and promote interaction of the modified histones with other proteins which positively regulate transcription. This complex may be required for the activation of transcriptional programs associated with oncogene and proto-oncogene mediated growth induction, tumor suppressor mediated growth arrest and replicative senescence, apoptosis, and DNA repair. NuA4 may also play a direct role in DNA repair when directly recruited to sites of DNA damage. Component of a SWR1-like complex that specifically mediates the removal of histone H2A.Z/H2AZ1 from the nucleosome. The polypeptide is Inhibitor of growth protein 3 (ING3) (Pongo abelii (Sumatran orangutan)).